Reading from the N-terminus, the 487-residue chain is Glutamyl-tRNA(Gln) amidotransferase subunit A (487 aa).

Residues Lys82 and Ser157 each act as charge relay system in the active site. Residue Ser181 is the Acyl-ester intermediate of the active site.

This sequence belongs to the amidase family. GatA subfamily. Heterotrimer of A, B and C subunits.

It catalyses the reaction L-glutamyl-tRNA(Gln) + L-glutamine + ATP + H2O = L-glutaminyl-tRNA(Gln) + L-glutamate + ADP + phosphate + H(+). Its function is as follows. Allows the formation of correctly charged Gln-tRNA(Gln) through the transamidation of misacylated Glu-tRNA(Gln) in organisms which lack glutaminyl-tRNA synthetase. The reaction takes place in the presence of glutamine and ATP through an activated gamma-phospho-Glu-tRNA(Gln). The polypeptide is Glutamyl-tRNA(Gln) amidotransferase subunit A (Fusobacterium nucleatum subsp. nucleatum (strain ATCC 25586 / DSM 15643 / BCRC 10681 / CIP 101130 / JCM 8532 / KCTC 2640 / LMG 13131 / VPI 4355)).